The sequence spans 662 residues: 72 kDa type IV collagenase (662 aa).

Residues 1–29 (MEALGARGALAGFLRALCVLGCLLGRATA) form the signal peptide. Residues 30–109 (PPSPVIKFPG…PRCGNPDVAN (80 aa)) constitute a propeptide, activation peptide. Residues 100-107 (PRCGNPDV) carry the Cysteine switch motif. Cys-102 lines the Zn(2+) pocket. A collagenase-like 1 region spans residues 110–221 (YNFFPRKPKW…LWTLGEGQVV (112 aa)). Ca(2+)-binding residues include Asp-134 and Asp-168. Zn(2+) contacts are provided by His-178 and Asp-180. Ca(2+) contacts are provided by Asp-185 and Gly-186. His-193 is a binding site for Zn(2+). Residues Gly-200, Gly-202, and Asp-204 each coordinate Ca(2+). His-206 contributes to the Zn(2+) binding site. Asp-208, Asp-209, and Glu-211 together coordinate Ca(2+). A collagen-binding region spans residues 222–396 (RVKYGNADGE…WGFCPDQGYS (175 aa)). 3 consecutive Fibronectin type-II domains span residues 228-276 (ADGE…FCPH), 286-334 (ADGQ…FCPE), and 344-392 (SEGA…FCPD). 6 disulfides stabilise this stretch: Cys-233–Cys-259, Cys-247–Cys-274, Cys-291–Cys-317, Cys-305–Cys-332, Cys-349–Cys-375, and Cys-363–Cys-390. A collagenase-like 2 region spans residues 397 to 467 (LFLVAAHEFG…GPTPTLGPVT (71 aa)). Residue His-403 participates in Zn(2+) binding. Glu-404 is a catalytic residue. Positions 407 and 413 each coordinate Zn(2+). Residues 414–662 (SQDPGALMAP…GSIKTDWLGC (249 aa)) are required for inhibitor TIMP2 binding. Cys-471 and Cys-662 are joined by a disulfide. Hemopexin repeat units follow at residues 474 to 518 (DIVF…WPEL), 519 to 565 (PEKI…GLPP), 567 to 615 (VQRV…WNAI), and 616 to 662 (PDHL…WLGC). 3 residues coordinate Ca(2+): Asp-478, Asp-523, and Asp-571. N-linked (GlcNAc...) asparagine glycosylation occurs at Asn-575. Asp-620 serves as a coordination point for Ca(2+). N-linked (GlcNAc...) asparagine glycosylation is present at Asn-644.

It belongs to the peptidase M10A family. As to quaternary structure, interacts (via the C-terminal hemopexin-like domains-containing region) with the integrin alpha-V/beta-3; the interaction promotes vascular invasion in angiogenic vessels and melamoma cells. Interacts (via the C-terminal PEX domain) with TIMP2 (via the C-terminal); the interaction inhibits the degradation activity. Interacts with GSK3B. The cofactor is Ca(2+). Zn(2+) serves as cofactor. Post-translationally, phosphorylation on multiple sites modulates enzymatic activity. Phosphorylated by PKC in vitro. In terms of processing, the propeptide is processed by MMP14 (MT-MMP1) and MMP16 (MT-MMP3). Autocatalytic cleavage in the C-terminal produces the anti-angiogenic peptide, PEX. This processing appears to be facilitated by binding integrinv/beta3.

The protein localises to the secreted. It is found in the extracellular space. Its subcellular location is the extracellular matrix. It localises to the membrane. The protein resides in the nucleus. It catalyses the reaction Cleavage of gelatin type I and collagen types IV, V, VII, X. Cleaves the collagen-like sequence Pro-Gln-Gly-|-Ile-Ala-Gly-Gln.. Ubiquitinous metalloproteinase that is involved in diverse functions such as remodeling of the vasculature, angiogenesis, tissue repair, tumor invasion, inflammation, and atherosclerotic plaque rupture. As well as degrading extracellular matrix proteins, can also act on several nonmatrix proteins such as big endothelial 1 and beta-type CGRP promoting vasoconstriction. Also cleaves KISS at a Gly-|-Leu bond. Appears to have a role in myocardial cell death pathways. Contributes to myocardial oxidative stress by regulating the activity of GSK3beta. Cleaves GSK3beta in vitro. Involved in the formation of the fibrovascular tissues. In terms of biological role, PEX, the C-terminal non-catalytic fragment of MMP2, possesses anti-angiogenic and anti-tumor properties and inhibits cell migration and cell adhesion to FGF2 and vitronectin. Ligand for integrin alpha-v/beta-3 on the surface of blood vessels. The protein is 72 kDa type IV collagenase (MMP2) of Oryctolagus cuniculus (Rabbit).